Consider the following 158-residue polypeptide: Protein-export protein SecB (158 aa).

This sequence belongs to the SecB family. In terms of assembly, homotetramer, a dimer of dimers. One homotetramer interacts with 1 SecA dimer.

It is found in the cytoplasm. Functionally, one of the proteins required for the normal export of preproteins out of the cell cytoplasm. It is a molecular chaperone that binds to a subset of precursor proteins, maintaining them in a translocation-competent state. It also specifically binds to its receptor SecA. This chain is Protein-export protein SecB, found in Yersinia pestis (strain Pestoides F).